The primary structure comprises 420 residues: Dynein axonemal assembly factor 4 (420 aa).

In terms of domain architecture, CS spans 3–87 (LQVSDYSWQQ…KEAAMWETLS (85 aa)). The interval 7-103 (DYSWQQTKTA…EMMQRIREKS (97 aa)) is mediates interaction with ESR1 and STUB1. TPR repeat units follow at residues 290 to 323 (PEWL…NNKM), 324 to 357 (PLLY…LMPP), and 366 to 399 (MKAH…DPSN).

In terms of assembly, interacts with ZMYND10. Interacts with STUB1. Interacts with ESR1 and ESR2. Interacts with DNAAF2. Interacts with CCT3, CCT4, CCT5 and CCT8. Interacts with DNAAF6/PIH1D3.

It localises to the nucleus. The protein localises to the cytoplasm. It is found in the cell projection. The protein resides in the neuron projection. Its subcellular location is the dynein axonemal particle. Functionally, involved in neuronal migration during development of the cerebral neocortex. May regulate the stability and proteasomal degradation of the estrogen receptors that play an important role in neuronal differentiation, survival and plasticity. Axonemal dynein assembly factor required for ciliary motility. In Pan paniscus (Pygmy chimpanzee), this protein is Dynein axonemal assembly factor 4.